The primary structure comprises 480 residues: UDP-N-acetylmuramoylalanine--D-glutamate ligase (480 aa).

ATP is bound at residue 120–126; it reads GTNGKTT.

Belongs to the MurCDEF family.

The protein resides in the cytoplasm. It carries out the reaction UDP-N-acetyl-alpha-D-muramoyl-L-alanine + D-glutamate + ATP = UDP-N-acetyl-alpha-D-muramoyl-L-alanyl-D-glutamate + ADP + phosphate + H(+). It functions in the pathway cell wall biogenesis; peptidoglycan biosynthesis. In terms of biological role, cell wall formation. Catalyzes the addition of glutamate to the nucleotide precursor UDP-N-acetylmuramoyl-L-alanine (UMA). The chain is UDP-N-acetylmuramoylalanine--D-glutamate ligase from Nocardia farcinica (strain IFM 10152).